A 367-amino-acid chain; its full sequence is DNA replication and repair protein RecF (367 aa).

Residue Gly30–Thr37 participates in ATP binding.

This sequence belongs to the RecF family.

It is found in the cytoplasm. In terms of biological role, the RecF protein is involved in DNA metabolism; it is required for DNA replication and normal SOS inducibility. RecF binds preferentially to single-stranded, linear DNA. It also seems to bind ATP. This Pseudomonas putida (strain W619) protein is DNA replication and repair protein RecF.